The chain runs to 321 residues: tRNA 2-thiolation protein NcsA (321 aa).

K204 is covalently cross-linked (Glycyl lysine isopeptide (Lys-Gly) (interchain with G-Cter in SAMP2)).

Belongs to the TtcA family. CTU1/NCS6/ATPBD3 subfamily. As to quaternary structure, interacts with monomeric and polymeric forms of SAMP2. Interacts with UbaA. Interacts with archaeal EF-1-alpha and Pan1. Non-sampylated protein forms a complex with archaeal CPSF1 of approximately 100 kDa. Sampylated at Lys-204 with the archaeal ubiquitin-like protein SAMP2. Polymeric chains of SAMP2 are also linked.

It participates in tRNA modification; 5-methoxycarbonylmethyl-2-thiouridine-tRNA biosynthesis. Required for thiolation of mcm(5)S(2)U at the wobble uridine position of tRNA specific for lysine (tRNA(Lys)). Probably acts by catalyzing adenylation of tRNA, an intermediate required for 2-thiolation. May also act as a sulfurtransferase that transfers sulfur from thiocarboxylated SAMP2 onto the uridine of tRNA at wobble position. Required for cell growth at elevated temperatures. This Haloferax volcanii (strain ATCC 29605 / DSM 3757 / JCM 8879 / NBRC 14742 / NCIMB 2012 / VKM B-1768 / DS2) (Halobacterium volcanii) protein is tRNA 2-thiolation protein NcsA.